Consider the following 462-residue polypeptide: Glycine--tRNA ligase (462 aa).

Substrate is bound by residues R94 and E143. ATP-binding positions include 175–177, 185–190, 259–260, and 308–311; these read RNE, FRTCEF, EL, and GLTR. A substrate-binding site is contributed by 190 to 194; the sequence is FEQME. 304–308 provides a ligand contact to substrate; sequence ETSAG.

This sequence belongs to the class-II aminoacyl-tRNA synthetase family. Homodimer.

The protein resides in the cytoplasm. It carries out the reaction tRNA(Gly) + glycine + ATP = glycyl-tRNA(Gly) + AMP + diphosphate. Catalyzes the attachment of glycine to tRNA(Gly). The chain is Glycine--tRNA ligase from Treponema pallidum (strain Nichols).